The chain runs to 380 residues: Lipoyl synthase, mitochondrial (380 aa).

Cys-104, Cys-109, Cys-115, Cys-135, Cys-139, Cys-142, and Ser-350 together coordinate [4Fe-4S] cluster. Positions 120 to 339 (EHGTQTATIM…ETRGNELGFL (220 aa)) constitute a Radical SAM core domain.

It belongs to the radical SAM superfamily. Lipoyl synthase family. [4Fe-4S] cluster serves as cofactor.

The protein localises to the mitochondrion. The catalysed reaction is [[Fe-S] cluster scaffold protein carrying a second [4Fe-4S](2+) cluster] + N(6)-octanoyl-L-lysyl-[protein] + 2 oxidized [2Fe-2S]-[ferredoxin] + 2 S-adenosyl-L-methionine + 4 H(+) = [[Fe-S] cluster scaffold protein] + N(6)-[(R)-dihydrolipoyl]-L-lysyl-[protein] + 4 Fe(3+) + 2 hydrogen sulfide + 2 5'-deoxyadenosine + 2 L-methionine + 2 reduced [2Fe-2S]-[ferredoxin]. It functions in the pathway protein modification; protein lipoylation via endogenous pathway; protein N(6)-(lipoyl)lysine from octanoyl-[acyl-carrier-protein]: step 2/2. Functionally, catalyzes the radical-mediated insertion of two sulfur atoms into the C-6 and C-8 positions of the octanoyl moiety bound to the lipoyl domains of lipoate-dependent enzymes, thereby converting the octanoylated domains into lipoylated derivatives. This Culex quinquefasciatus (Southern house mosquito) protein is Lipoyl synthase, mitochondrial.